A 397-amino-acid chain; its full sequence is Tryptophan synthase beta chain (397 aa).

Lys-88 bears the N6-(pyridoxal phosphate)lysine mark.

The protein belongs to the TrpB family. In terms of assembly, tetramer of two alpha and two beta chains. The cofactor is pyridoxal 5'-phosphate.

The catalysed reaction is (1S,2R)-1-C-(indol-3-yl)glycerol 3-phosphate + L-serine = D-glyceraldehyde 3-phosphate + L-tryptophan + H2O. It functions in the pathway amino-acid biosynthesis; L-tryptophan biosynthesis; L-tryptophan from chorismate: step 5/5. Functionally, the beta subunit is responsible for the synthesis of L-tryptophan from indole and L-serine. This is Tryptophan synthase beta chain from Haemophilus influenzae (strain 86-028NP).